A 163-amino-acid chain; its full sequence is uncharacterized protein (163 aa).

A disordered region spans residues 23 to 113; sequence DFPEEPPLWV…QVADGVHSQQ (91 aa). Residue Ser102 is modified to Phosphoserine.

This is an uncharacterized protein from Mus musculus (Mouse).